We begin with the raw amino-acid sequence, 345 residues long: GTPase Obg (345 aa).

An Obg domain is found at 1–158 (MFIDSVKITL…RLVRLELKLI (158 aa)). The region spanning 159–339 (ADVGLVGFPN…LKFMLLEEIK (181 aa)) is the OBG-type G domain. GTP is bound by residues 165-172 (GFPNVGKS), 190-194 (FTTLT), 212-215 (DIPG), 280-283 (SKSD), and 320-322 (SSL). Mg(2+)-binding residues include S172 and T192.

Belongs to the TRAFAC class OBG-HflX-like GTPase superfamily. OBG GTPase family. Monomer. It depends on Mg(2+) as a cofactor.

It is found in the cytoplasm. Functionally, an essential GTPase which binds GTP, GDP and possibly (p)ppGpp with moderate affinity, with high nucleotide exchange rates and a fairly low GTP hydrolysis rate. Plays a role in control of the cell cycle, stress response, ribosome biogenesis and in those bacteria that undergo differentiation, in morphogenesis control. In Campylobacter jejuni subsp. jejuni serotype O:6 (strain 81116 / NCTC 11828), this protein is GTPase Obg.